Consider the following 411-residue polypeptide: Diaminobutyrate--2-oxoglutarate transaminase (411 aa).

Position 262 is an N6-(pyridoxal phosphate)lysine (Lys262).

It belongs to the class-III pyridoxal-phosphate-dependent aminotransferase family. Pyridoxal 5'-phosphate serves as cofactor.

The catalysed reaction is L-2,4-diaminobutanoate + 2-oxoglutarate = L-aspartate 4-semialdehyde + L-glutamate. It participates in amine and polyamine biosynthesis; ectoine biosynthesis; L-ectoine from L-aspartate 4-semialdehyde: step 1/3. Functionally, catalyzes reversively the conversion of L-aspartate beta-semialdehyde (ASA) to L-2,4-diaminobutyrate (DABA) by transamination with L-glutamate. This Vibrio cholerae serotype O1 (strain ATCC 39315 / El Tor Inaba N16961) protein is Diaminobutyrate--2-oxoglutarate transaminase (ectB).